The chain runs to 463 residues: Bifunctional protein GlmU (463 aa).

The tract at residues 1–233 (MSKKSTFIIL…NFEVMGINSR (233 aa)) is pyrophosphorylase. UDP-N-acetyl-alpha-D-glucosamine-binding positions include 10-13 (LAAG), Lys-24, Gln-76, 81-82 (GT), 104-106 (YGD), Gly-143, Glu-158, Asn-173, and Asn-231. Mg(2+) is bound at residue Asp-106. Residue Asn-231 participates in Mg(2+) binding. The linker stretch occupies residues 234–254 (YELFVAEQELKLRINKEHLSK). The tract at residues 255–463 (GVQIIDIYST…LRRKQMYENR (209 aa)) is N-acetyltransferase. Residues Arg-336 and Lys-354 each contribute to the UDP-N-acetyl-alpha-D-glucosamine site. Residue His-366 is the Proton acceptor of the active site. Residues Tyr-369 and Asn-380 each contribute to the UDP-N-acetyl-alpha-D-glucosamine site. Acetyl-CoA-binding positions include 389-390 (NY), Ala-426, and Arg-443.

The protein in the N-terminal section; belongs to the N-acetylglucosamine-1-phosphate uridyltransferase family. It in the C-terminal section; belongs to the transferase hexapeptide repeat family. Homotrimer. Mg(2+) is required as a cofactor.

The protein resides in the cytoplasm. It carries out the reaction alpha-D-glucosamine 1-phosphate + acetyl-CoA = N-acetyl-alpha-D-glucosamine 1-phosphate + CoA + H(+). It catalyses the reaction N-acetyl-alpha-D-glucosamine 1-phosphate + UTP + H(+) = UDP-N-acetyl-alpha-D-glucosamine + diphosphate. Its pathway is nucleotide-sugar biosynthesis; UDP-N-acetyl-alpha-D-glucosamine biosynthesis; N-acetyl-alpha-D-glucosamine 1-phosphate from alpha-D-glucosamine 6-phosphate (route II): step 2/2. The protein operates within nucleotide-sugar biosynthesis; UDP-N-acetyl-alpha-D-glucosamine biosynthesis; UDP-N-acetyl-alpha-D-glucosamine from N-acetyl-alpha-D-glucosamine 1-phosphate: step 1/1. It participates in bacterial outer membrane biogenesis; LPS lipid A biosynthesis. Functionally, catalyzes the last two sequential reactions in the de novo biosynthetic pathway for UDP-N-acetylglucosamine (UDP-GlcNAc). The C-terminal domain catalyzes the transfer of acetyl group from acetyl coenzyme A to glucosamine-1-phosphate (GlcN-1-P) to produce N-acetylglucosamine-1-phosphate (GlcNAc-1-P), which is converted into UDP-GlcNAc by the transfer of uridine 5-monophosphate (from uridine 5-triphosphate), a reaction catalyzed by the N-terminal domain. The sequence is that of Bifunctional protein GlmU from Caldicellulosiruptor saccharolyticus (strain ATCC 43494 / DSM 8903 / Tp8T 6331).